The chain runs to 441 residues: Velvet complex subunit B (441 aa).

Composition is skewed to polar residues over residues 1 to 14 (MNPG…QPGH) and 60 to 75 (MMQQ…STTE). Residues 1–104 (MNPGYSSTAS…QPHVGEQDGR (104 aa)) are disordered. Residues 100-426 (EQDGRKYRLD…AGQGIKIPIR (327 aa)) enclose the Velvet domain.

The protein belongs to the velvet family. VelB subfamily. As to quaternary structure, component of the heterotrimeric velvet complex composed of LAEA, VEA and VELB; VEA acting as a bridging protein between LAEA and VELB. Forms a heterodimeric complex with VOSA; the formation of the VELB-VOSA complex is light-dependent.

It localises to the nucleus. Its subcellular location is the cytoplasm. Its function is as follows. Component of the velvet transcription factor complex that controls sexual/asexual developmental ratio in response to light, promoting sexual development in the darkness while stimulating asexual sporulation under illumination. The velvet complex acts as a global regulator for secondary metabolite gene expression. Component of the VELB-VOSA heterodimeric complex that plays a dual role in activating genes associated with spore maturation and repressing certain development-associated genes. The VELB-VOSA complex binds DNA through the DNA-binding domain of VOSA that recognizes an 11-nucleotide consensus sequence 5'-CTGGCCGCGGC-3' consisting of two motifs in the promoters of key developmental regulatory genes. Involved in the regulation of the response to eactive oxygen species (ROS) stress. The chain is Velvet complex subunit B from Pyricularia oryzae (strain 70-15 / ATCC MYA-4617 / FGSC 8958) (Rice blast fungus).